Reading from the N-terminus, the 434-residue chain is Histidinol dehydrogenase (434 aa).

Residues Y130, Q188, and N211 each coordinate NAD(+). Substrate-binding residues include S237, Q259, and H262. Zn(2+) is bound by residues Q259 and H262. Active-site proton acceptor residues include E326 and H327. H327, D360, E414, and H419 together coordinate substrate. Residue D360 coordinates Zn(2+). H419 provides a ligand contact to Zn(2+).

The protein belongs to the histidinol dehydrogenase family. As to quaternary structure, homodimer. Zn(2+) serves as cofactor.

The enzyme catalyses L-histidinol + 2 NAD(+) + H2O = L-histidine + 2 NADH + 3 H(+). Its pathway is amino-acid biosynthesis; L-histidine biosynthesis; L-histidine from 5-phospho-alpha-D-ribose 1-diphosphate: step 9/9. Catalyzes the sequential NAD-dependent oxidations of L-histidinol to L-histidinaldehyde and then to L-histidine. The chain is Histidinol dehydrogenase from Salmonella choleraesuis (strain SC-B67).